The following is a 283-amino-acid chain: Pantothenate synthetase (283 aa).

31-38 (MGALHDGH) contributes to the ATP binding site. Catalysis depends on H38, which acts as the Proton donor. Q62 is a (R)-pantoate binding site. Q62 is a beta-alanine binding site. 148–151 (GKKD) serves as a coordination point for ATP. A (R)-pantoate-binding site is contributed by Q154. ATP-binding positions include V177 and 185 to 188 (KSSR).

Belongs to the pantothenate synthetase family. In terms of assembly, homodimer.

The protein resides in the cytoplasm. It carries out the reaction (R)-pantoate + beta-alanine + ATP = (R)-pantothenate + AMP + diphosphate + H(+). The protein operates within cofactor biosynthesis; (R)-pantothenate biosynthesis; (R)-pantothenate from (R)-pantoate and beta-alanine: step 1/1. Its function is as follows. Catalyzes the condensation of pantoate with beta-alanine in an ATP-dependent reaction via a pantoyl-adenylate intermediate. This chain is Pantothenate synthetase, found in Staphylococcus aureus (strain USA300).